A 326-amino-acid polypeptide reads, in one-letter code: N-acetyl-gamma-glutamyl-phosphate reductase (326 aa).

Residue cysteine 155 is part of the active site.

Belongs to the NAGSA dehydrogenase family. Type 1 subfamily.

The protein localises to the cytoplasm. It catalyses the reaction N-acetyl-L-glutamate 5-semialdehyde + phosphate + NADP(+) = N-acetyl-L-glutamyl 5-phosphate + NADPH + H(+). It functions in the pathway amino-acid biosynthesis; L-arginine biosynthesis; N(2)-acetyl-L-ornithine from L-glutamate: step 3/4. In terms of biological role, catalyzes the NADPH-dependent reduction of N-acetyl-5-glutamyl phosphate to yield N-acetyl-L-glutamate 5-semialdehyde. The sequence is that of N-acetyl-gamma-glutamyl-phosphate reductase from Shewanella baltica (strain OS195).